The primary structure comprises 465 residues: MDSSPPNTIIEEAPPRFSELKPPLSEDIIEALDRSGFEVCTPVQAETIPFLCSHKDVVVDAATGSGKTLAFLLPFIEIIRRSNSYPPKPHQVMGVIISPTRELSAQIHKVARAVRLDFAKCREVEADMNTLEEEGANLLIGTPGRLSDMMKRMEFLDFRNLEILILDEADRLLDMGFQKQVNYIISRLPKQRRTGLFSATQTQAVADLAKAGLRNPYLKCEADQKSSQLVHLLIENKNKKLVVFFMTCACVDYWGLVISKIPSLKSISFFPTHGKMDQKGRDTALASFTEASSGVLLCTDVAARGLDIPGIVYIRSLAIKDREVLEKGLKAFVSFVRAYKEHQCSYIFSWKGLEIGKLAMGYGILSFPYISEVKQDRIGIVGFTPVQGITFEDIKFKNKSREKQRQQNLLARKDKLQQEKRGKRKKSSKEAVDDSNKASRKRKLTGRQRQTIQTAQDEEEMNLRL.

Residues 17–45 (FSELKPPLSEDIIEALDRSGFEVCTPVQA) carry the Q motif motif. The Helicase ATP-binding domain occupies 48-219 (IPFLCSHKDV…KAGLRNPYLK (172 aa)). 61-68 (AATGSGKT) contributes to the ATP binding site. The DEAD box signature appears at 167-170 (DEAD). One can recognise a Helicase C-terminal domain in the interval 228 to 422 (QLVHLLIENK…KDKLQQEKRG (195 aa)). The tract at residues 413-465 (KDKLQQEKRGKRKKSSKEAVDDSNKASRKRKLTGRQRQTIQTAQDEEEMNLRL) is disordered. A compositionally biased stretch (basic and acidic residues) spans 428–437 (SKEAVDDSNK). Positions 456 to 465 (QDEEEMNLRL) are enriched in acidic residues.

The protein belongs to the DEAD box helicase family. DDX55/SPB4 subfamily.

It carries out the reaction ATP + H2O = ADP + phosphate + H(+). This Arabidopsis thaliana (Mouse-ear cress) protein is DEAD-box ATP-dependent RNA helicase 55 (RH55).